A 274-amino-acid chain; its full sequence is NH(3)-dependent NAD(+) synthetase (274 aa).

46 to 53 (GISGGQDS) lines the ATP pocket. Residue Asp52 participates in Mg(2+) binding. Arg140 serves as a coordination point for deamido-NAD(+). Thr160 is a binding site for ATP. Residue Glu165 participates in Mg(2+) binding. Residues Lys173 and Asp180 each coordinate deamido-NAD(+). ATP-binding residues include Lys189 and Thr211. 260–261 (HK) is a deamido-NAD(+) binding site.

This sequence belongs to the NAD synthetase family. In terms of assembly, homodimer.

The catalysed reaction is deamido-NAD(+) + NH4(+) + ATP = AMP + diphosphate + NAD(+) + H(+). Its pathway is cofactor biosynthesis; NAD(+) biosynthesis; NAD(+) from deamido-NAD(+) (ammonia route): step 1/1. Catalyzes the ATP-dependent amidation of deamido-NAD to form NAD. Uses ammonia as a nitrogen source. This Streptococcus equi subsp. zooepidemicus (strain H70) protein is NH(3)-dependent NAD(+) synthetase.